We begin with the raw amino-acid sequence, 448 residues long: Phosphoglucosamine mutase (448 aa).

Catalysis depends on Ser-100, which acts as the Phosphoserine intermediate. Mg(2+) contacts are provided by Ser-100, Asp-240, Asp-242, and Asp-244. Ser-100 carries the phosphoserine modification.

It belongs to the phosphohexose mutase family. Mg(2+) serves as cofactor. In terms of processing, activated by phosphorylation.

The catalysed reaction is alpha-D-glucosamine 1-phosphate = D-glucosamine 6-phosphate. In terms of biological role, catalyzes the conversion of glucosamine-6-phosphate to glucosamine-1-phosphate. The chain is Phosphoglucosamine mutase from Bacillus mycoides (strain KBAB4) (Bacillus weihenstephanensis).